The chain runs to 99 residues: DNA-binding protein Fis (99 aa).

A DNA-binding region (H-T-H motif) is located at residues 75 to 94; sequence QTRAANMLGINRGTLRKKLK.

Belongs to the transcriptional regulatory Fis family. As to quaternary structure, homodimer.

In terms of biological role, activates ribosomal RNA transcription. Plays a direct role in upstream activation of rRNA promoters. The chain is DNA-binding protein Fis from Haemophilus influenzae (strain 86-028NP).